A 512-amino-acid polypeptide reads, in one-letter code: Maturase K (512 aa).

Belongs to the intron maturase 2 family. MatK subfamily.

The protein resides in the plastid. It is found in the chloroplast. Usually encoded in the trnK tRNA gene intron. Probably assists in splicing its own and other chloroplast group II introns. In Oenothera glazioviana (Large-flowered evening primrose), this protein is Maturase K.